We begin with the raw amino-acid sequence, 444 residues long: Trigger factor (444 aa).

The PPIase FKBP-type domain occupies 166–251 (GDQVVIDFKG…VKAVKAPKAA (86 aa)).

It belongs to the FKBP-type PPIase family. Tig subfamily.

It localises to the cytoplasm. The catalysed reaction is [protein]-peptidylproline (omega=180) = [protein]-peptidylproline (omega=0). Functionally, involved in protein export. Acts as a chaperone by maintaining the newly synthesized protein in an open conformation. Functions as a peptidyl-prolyl cis-trans isomerase. In Cereibacter sphaeroides (strain ATCC 17029 / ATH 2.4.9) (Rhodobacter sphaeroides), this protein is Trigger factor.